Reading from the N-terminus, the 461-residue chain is Cysteine--tRNA ligase (461 aa).

Cysteine 28 lines the Zn(2+) pocket. Positions 30–40 match the 'HIGH' region motif; the sequence is ITVYDLCHIGH. Residues cysteine 209, histidine 234, and glutamate 238 each contribute to the Zn(2+) site. The short motif at 266–270 is the 'KMSKS' region element; the sequence is KMSKS. Residue lysine 269 participates in ATP binding.

The protein belongs to the class-I aminoacyl-tRNA synthetase family. As to quaternary structure, monomer. Zn(2+) is required as a cofactor.

Its subcellular location is the cytoplasm. It catalyses the reaction tRNA(Cys) + L-cysteine + ATP = L-cysteinyl-tRNA(Cys) + AMP + diphosphate. The polypeptide is Cysteine--tRNA ligase (Escherichia coli (strain SMS-3-5 / SECEC)).